Reading from the N-terminus, the 425-residue chain is Adenylosuccinate synthetase (425 aa).

Residues 12 to 18 (GDEGKGK) and 40 to 42 (GHT) each bind GTP. Asp-13 acts as the Proton acceptor in catalysis. Positions 13 and 40 each coordinate Mg(2+). IMP contacts are provided by residues 13–16 (DEGK), 38–41 (NAGH), Thr-129, Arg-143, Asn-221, Thr-236, and Arg-300. His-41 acts as the Proton donor in catalysis. 296–302 (VTTGRKR) provides a ligand contact to substrate. Residues Arg-302, 328 to 330 (KLD), and 410 to 412 (GVG) each bind GTP.

It belongs to the adenylosuccinate synthetase family. In terms of assembly, homodimer. Requires Mg(2+) as cofactor.

Its subcellular location is the cytoplasm. It carries out the reaction IMP + L-aspartate + GTP = N(6)-(1,2-dicarboxyethyl)-AMP + GDP + phosphate + 2 H(+). Its pathway is purine metabolism; AMP biosynthesis via de novo pathway; AMP from IMP: step 1/2. Its function is as follows. Plays an important role in the de novo pathway and in the salvage pathway of purine nucleotide biosynthesis. Catalyzes the first committed step in the biosynthesis of AMP from IMP. The chain is Adenylosuccinate synthetase from Phaeosphaeria nodorum (strain SN15 / ATCC MYA-4574 / FGSC 10173) (Glume blotch fungus).